We begin with the raw amino-acid sequence, 314 residues long: Olfactory receptor 6C6 (314 aa).

The Extracellular segment spans residues 1–24 (MKNKSMEIEFILLGLTDDPQLQIV). The N-linked (GlcNAc...) asparagine glycan is linked to N3. Residues 25–45 (IFLFLFLNYTLSLMGNLIIII) form a helical membrane-spanning segment. Topologically, residues 46-63 (LTLLDPRLKTPMYFFLRN) are cytoplasmic. The helical transmembrane segment at 64–84 (FSFLEVIFTTVCIPRFLITIV) threads the bilayer. Over 85-95 (TRDKTISYNNC) the chain is Extracellular. C95 and C177 are oxidised to a cystine. Residues 96-116 (ATQLFFILLPGVTEFYLLAAM) traverse the membrane as a helical segment. Residues 117–141 (SYDRYVAICKPLHYPIIMSSKVCYQ) are Cytoplasmic-facing. A helical transmembrane segment spans residues 142–162 (LVLSSWVTGFLIIFPPLVMGL). Topologically, residues 163 to 199 (KLDFCASKTIDHFMCETSPILQISCTDTHVLELMSFT) are extracellular. Residues 200–220 (LAVVTLVVTLVLVILSYTCII) form a helical membrane-spanning segment. Residues 221-237 (KTILKFSSAQQRNKAFS) lie on the Cytoplasmic side of the membrane. Residues 238 to 258 (TCTSHMIVVSMTYGSCIFMYI) traverse the membrane as a helical segment. Over 259 to 269 (KPSAKERVTVS) the chain is Extracellular. A helical membrane pass occupies residues 270-290 (KGVALLYTSIAPLLNPFIYTL). Over 291–314 (RNQQVKEVFWDVLQKNLCFSKRPF) the chain is Cytoplasmic.

It belongs to the G-protein coupled receptor 1 family.

Its subcellular location is the cell membrane. Its function is as follows. Odorant receptor. This Homo sapiens (Human) protein is Olfactory receptor 6C6 (OR6C6).